Here is a 70-residue protein sequence, read N- to C-terminus: Cold shock protein CspV (70 aa).

The CSD domain maps to 7–67 (GSVKWFNETK…GKKGPQASNV (61 aa)).

Its subcellular location is the cytoplasm. The polypeptide is Cold shock protein CspV (cspV) (Vibrio cholerae serotype O1 (strain ATCC 39315 / El Tor Inaba N16961)).